We begin with the raw amino-acid sequence, 542 residues long: Serine/threonine-protein phosphatase 2A regulatory subunit pptr-1 (542 aa).

2 disordered regions span residues M1–Q28 and D500–K542. Over residues K528–K542 the composition is skewed to polar residues.

This sequence belongs to the phosphatase 2A regulatory subunit B56 family. In terms of assembly, part of a complex consisting of a common heterodimeric core enzyme, composed of catalytic subunit let-92 and constant regulatory subunit paa-1, that associates with a variety of regulatory subunits which confer distinct properties to the holoenzyme. Interacts with akt-1 but not akt-2. Interacts with sgk-1. Interacts with P granule components meg-1, meg-3 and meg-4. Expressed in pharynx, vulva and spermatheca.

The protein localises to the cytoplasm. Its function is as follows. Probable regulatory subunit of serine/threonine-protein phosphatase let-92 which negatively regulates the insulin receptor signaling cascade composed of daf-2, age-1, akt-1, akt-2 and sgk-1 by promoting the dephosphorylation of akt-1 on 'Thr-350'. Negatively regulates several functions controlled by the insulin pathway including dauer formation, lifespan, fat storage and stress resistance. Plays a role in the asymmetric segregation of the P granule components during embryonic cell divisions but does not play an essential role in specifying germ cell fate. Within a PP2A phosphatase complex, acts redundantly with pptr-2, to dephosphorylate P granule components including meg-1 and meg-3 to promote the assembly and accumulation of zygotic P granules in the posterior cytoplasm during zygote polarization, and thus maintain P granule distribution and segregation in early stage embryos following meiosis. In adults, required to promote germ cell proliferation and differentiation when exposed to thermic stress. In Caenorhabditis elegans, this protein is Serine/threonine-protein phosphatase 2A regulatory subunit pptr-1.